Reading from the N-terminus, the 105-residue chain is Large ribosomal subunit protein bL21 (105 aa).

This sequence belongs to the bacterial ribosomal protein bL21 family. In terms of assembly, part of the 50S ribosomal subunit. Contacts protein L20.

This protein binds to 23S rRNA in the presence of protein L20. This Stenotrophomonas maltophilia (strain R551-3) protein is Large ribosomal subunit protein bL21.